A 305-amino-acid polypeptide reads, in one-letter code: uncharacterized protein (305 aa).

A disordered region spans residues alanine 267–alanine 287.

The protein belongs to the DnaB/DnaD family.

This is an uncharacterized protein from Listeria innocua serovar 6a (strain ATCC BAA-680 / CLIP 11262).